We begin with the raw amino-acid sequence, 463 residues long: ATP synthase subunit beta (463 aa).

152–159 contacts ATP; the sequence is GGAGVGKT.

Belongs to the ATPase alpha/beta chains family. In terms of assembly, F-type ATPases have 2 components, CF(1) - the catalytic core - and CF(0) - the membrane proton channel. CF(1) has five subunits: alpha(3), beta(3), gamma(1), delta(1), epsilon(1). CF(0) has three main subunits: a(1), b(2) and c(9-12). The alpha and beta chains form an alternating ring which encloses part of the gamma chain. CF(1) is attached to CF(0) by a central stalk formed by the gamma and epsilon chains, while a peripheral stalk is formed by the delta and b chains.

The protein resides in the cell inner membrane. It catalyses the reaction ATP + H2O + 4 H(+)(in) = ADP + phosphate + 5 H(+)(out). Functionally, produces ATP from ADP in the presence of a proton gradient across the membrane. The catalytic sites are hosted primarily by the beta subunits. This chain is ATP synthase subunit beta, found in Shewanella sp. (strain ANA-3).